A 299-amino-acid chain; its full sequence is Palmitoyltransferase ZDHHC3 (299 aa).

At 1 to 47 (MMLIPTHHFRDIERKPEYLQPEKCAPPPFPGPVGTMWFIRDGCGIAC) the chain is on the cytoplasmic side. At Tyr-18 the chain carries Phosphotyrosine. Residues 48-68 (AIVTWFLVLYAEFVVLFVMLI) traverse the membrane as a helical segment. Residues 69–72 (PSRD) are Lumenal-facing. The helical transmembrane segment at 73 to 93 (YAYSIINGIVFNLLAFLALAS) threads the bilayer. Residues 94–171 (HCRAMLTDPG…NCVGENNQKY (78 aa)) lie on the Cytoplasmic side of the membrane. The 127-residue stretch at 128–254 (KCPKCCSIKP…DETGIEQLKK (127 aa)) folds into the DHHC domain. Cys-146 is lipidated: S-palmitoyl cysteine. The S-palmitoyl cysteine intermediate role is filled by Cys-157. Residues 172–192 (FVLFTMYIALISLHALIMVGF) form a helical membrane-spanning segment. The Lumenal portion of the chain corresponds to 193–214 (HFLHCFEEDWTKCSSFSPPTTV). A helical transmembrane segment spans residues 215-235 (ILLILLCFEALLFLIFTSVMF). Residues 236-299 (GTQVHSICTD…GKADPYQYVV (64 aa)) lie on the Cytoplasmic side of the membrane.

This sequence belongs to the DHHC palmitoyltransferase family. Monomer. Homooligomers. The monomeric form has a higher catalytic activity. Forms heterooligomers with ZDHHC7. Interacts with TNFRSF10A. Phosphorylation by FGFR1 and SRC probably regulates the palmitoyltransferase activity. In terms of processing, autopalmitoylated.

It localises to the golgi apparatus membrane. The enzyme catalyses L-cysteinyl-[protein] + hexadecanoyl-CoA = S-hexadecanoyl-L-cysteinyl-[protein] + CoA. The catalysed reaction is L-cysteinyl-[protein] + tetradecanoyl-CoA = S-tetradecanoyl-L-cysteinyl-[protein] + CoA. It carries out the reaction L-cysteinyl-[protein] + octadecanoyl-CoA = S-octadecanoyl-L-cysteinyl-[protein] + CoA. Golgi-localized palmitoyltransferase that catalyzes the addition of palmitate onto various protein substrates. Has no stringent fatty acid selectivity and in addition to palmitate can also transfer onto target proteins myristate from tetradecanoyl-CoA and stearate from octadecanoyl-CoA. Plays an important role in G protein-coupled receptor signaling pathways involving GNAQ and potentially other heterotrimeric G proteins by regulating their dynamic association with the plasma membrane. Palmitoylates ITGA6 and ITGB4, thereby regulating the alpha-6/beta-4 integrin localization, expression and function in cell adhesion to laminin. Plays a role in the TRAIL-activated apoptotic signaling pathway most probably through the palmitoylation and localization to the plasma membrane of TNFRSF10A. In the brain, by palmitoylating the gamma subunit GABRG2 of GABA(A) receptors and regulating their postsynaptic accumulation, plays a role in synaptic GABAergic inhibitory function and GABAergic innervation. Palmitoylates the neuronal protein GAP43 which is also involved in the formation of GABAergic synapses. Palmitoylates NCDN thereby regulating its association with endosome membranes. Probably palmitoylates PRCD and is involved in its proper localization within the photoreceptor. Could mediate the palmitoylation of NCAM1 and regulate neurite outgrowth. Could palmitoylate DNAJC5 and regulate its localization to Golgi membranes. Also constitutively palmitoylates DLG4. May also palmitoylate SNAP25. Could palmitoylate the glutamate receptors GRIA1 and GRIA2 but this has not been confirmed in vivo. Could also palmitoylate the D(2) dopamine receptor DRD2. May also palmitoylate LAMTOR1, promoting its localization to lysosomal membranes. Palmitoylates the Toll-like receptor 9/TLR9 in the Golgi and thereby regulates TLR9 trafficking to endosomes. May palmitoylate CALHM1 and CALHM3 subunits of gustatory voltage-gated ion channels and modulate channel gating and kinetics. This Rattus norvegicus (Rat) protein is Palmitoyltransferase ZDHHC3.